The chain runs to 387 residues: 1-deoxy-D-xylulose 5-phosphate reductoisomerase (387 aa).

Residues T10, G11, S12, V13, N38, and N119 each coordinate NADPH. K120 is a 1-deoxy-D-xylulose 5-phosphate binding site. E121 provides a ligand contact to NADPH. D145 serves as a coordination point for Mn(2+). 1-deoxy-D-xylulose 5-phosphate contacts are provided by S146, E147, S170, and H193. E147 provides a ligand contact to Mn(2+). G199 is a binding site for NADPH. Residues S206, N211, K212, and E215 each coordinate 1-deoxy-D-xylulose 5-phosphate. E215 provides a ligand contact to Mn(2+).

Belongs to the DXR family. It depends on Mg(2+) as a cofactor. Mn(2+) serves as cofactor.

It carries out the reaction 2-C-methyl-D-erythritol 4-phosphate + NADP(+) = 1-deoxy-D-xylulose 5-phosphate + NADPH + H(+). It functions in the pathway isoprenoid biosynthesis; isopentenyl diphosphate biosynthesis via DXP pathway; isopentenyl diphosphate from 1-deoxy-D-xylulose 5-phosphate: step 1/6. Functionally, catalyzes the NADPH-dependent rearrangement and reduction of 1-deoxy-D-xylulose-5-phosphate (DXP) to 2-C-methyl-D-erythritol 4-phosphate (MEP). The chain is 1-deoxy-D-xylulose 5-phosphate reductoisomerase from Wolbachia pipientis wMel.